We begin with the raw amino-acid sequence, 111 residues long: uncharacterized protein (111 aa).

A run of 2 helical transmembrane segments spans residues 7-29 and 49-71; these read LYSS…RALY and PSLL…SINL.

It is found in the membrane. This is an uncharacterized protein from Saccharomyces cerevisiae (strain ATCC 204508 / S288c) (Baker's yeast).